We begin with the raw amino-acid sequence, 122 residues long: Large ribosomal subunit protein uL14 (122 aa).

The protein belongs to the universal ribosomal protein uL14 family. In terms of assembly, part of the 50S ribosomal subunit. Forms a cluster with proteins L3 and L19. In the 70S ribosome, L14 and L19 interact and together make contacts with the 16S rRNA in bridges B5 and B8.

Binds to 23S rRNA. Forms part of two intersubunit bridges in the 70S ribosome. This chain is Large ribosomal subunit protein uL14, found in Delftia acidovorans (strain DSM 14801 / SPH-1).